Reading from the N-terminus, the 881-residue chain is Dynamin-like GTPase MGM1, mitochondrial (881 aa).

Residues 1–59 constitute a mitochondrion transit peptide; the sequence is MNASPVRLLILRRQLATHPAILYSSPYIKSPLVHLHSRMSNVHRSAHANALSFVITRRS. Residues 60 to 72 lie on the Mitochondrial matrix side of the membrane; it reads ISHFPKIISKIIR. The helical; Signal-anchor for type II membrane protein transmembrane segment at 73-92 threads the bilayer; it reads LPIYVGGGMAAAGSYIAYKM. Topologically, residues 93–881 are mitochondrial intermembrane; it reads EEASSFTKDK…KSYKGVSKNL (789 aa). Residues 145 to 183 form a disordered region; it reads ATSLDDDESKRQGDPKDDDDEDDDDEDDENDSVDTTQDE. The segment covering 160–176 has biased composition (acidic residues); sequence KDDDDEDDDDEDDENDS. The 299-residue stretch at 207-505 folds into the Dynamin-type G domain; the sequence is HLTLPSIVVI…LEISMSNALE (299 aa). Positions 217–224 are G1 motif; the sequence is GSQSSGKS. The GTP site is built by serine 220, serine 221, glycine 222, lysine 223, serine 224, serine 225, and glycine 239. Mg(2+) is bound at residue serine 224. A G2 motif region spans residues 243–245; it reads VTR. 2 residues coordinate Mg(2+): threonine 244 and aspartate 317. The G3 motif stretch occupies residues 317-320; the sequence is DLPG. The interval 385-388 is G4 motif; it reads TKLD. The GTP site is built by lysine 386, aspartate 388, and threonine 415. A G5 motif region spans residues 414 to 417; sequence ITKT. The tract at residues 668–780 is paddle region; it reads STADQVENCI…KMLKNKCHST (113 aa). A disulfide bond links cysteine 777 and cysteine 786. In terms of domain architecture, GED spans 780-872; it reads TIEKDRCPEV…KIDSILVFKK (93 aa).

Belongs to the TRAFAC class dynamin-like GTPase superfamily. Dynamin/Fzo/YdjA family. In terms of assembly, oligomeric complex consisting of membrane-bound and soluble forms of MGM1. Associates with FZO1 through interaction with the intermembrane space domain of UGO1 which binds FZO1 through its cytoplasmic domain. Cleavage of the transit peptide by mitochondrial processing protease (MPP) produces a long integral membrane form of MGM1 (l-MGM1). Further processing by the rhomboid protease PCP1 produces a short peripheral membrane form of MGM1 (s-MGM1). Both isoforms are required for full activity.

Its subcellular location is the mitochondrion inner membrane. The protein resides in the mitochondrion intermembrane space. The enzyme catalyses GTP + H2O = GDP + phosphate + H(+). In terms of biological role, dynamin-related GTPase that is essential for normal mitochondrial morphology by mediating fusion of the mitochondrial inner membranes, regulating cristae morphology and maintaining respiratory chain function. Exists in two forms: the transmembrane, long form (Dynamin-like GTPase MGM1, long form; L-MGM1), which is tethered to the inner mitochondrial membrane, and the short soluble form (Dynamin-like GTPase MGM1, short form; S-MGM1), which results from proteolytic cleavage and localizes in the intermembrane space. Both forms (L-MGM1 and S-MGM1) cooperate to catalyze the fusion of the mitochondrial inner membrane. The equilibrium between L-MGM1 and S-MGM1 is essential: excess levels of S-MGM1, following loss of mitochondrial membrane potential, lead to an impaired equilibrium between L-MGM1 and S-MGM1, inhibiting mitochondrial fusion. Plays a role in the maintenance and remodeling of mitochondrial cristae, some invaginations of the mitochondrial inner membrane that provide an increase in the surface area. Probably acts by forming helical filaments at the inside of inner membrane tubes with the shape and dimensions of crista junctions. Functionally, constitutes the transmembrane long form (L-MGM1) that plays a central role in mitochondrial inner membrane fusion and cristae morphology. L-MGM1 and the soluble short form (S-MGM1) form higher-order helical assemblies that coordinate the fusion of mitochondrial inner membranes. Inner membrane-anchored L-MGM1 molecules initiate membrane remodeling by recruiting soluble S-MGM1 to rapidly polymerize into a flexible cylindrical scaffold encaging the mitochondrial inner membrane. Once at the membrane surface, the formation of S-MGM1 helices induce bilayer curvature. MGM1 dimerization through the paddle region, which inserts into cardiolipin-containing membrane, promotes GTP hydrolysis and the helical assembly of a flexible MGM1 lattice on the membrane, which drives membrane curvature and mitochondrial fusion. Constitutes the soluble short form (S-MGM1) generated by cleavage by PCP1, which plays a central role in mitochondrial inner membrane fusion and cristae morphology. The transmembrane long form (L-MGM1) and the S-MGM1 form higher-order helical assemblies that coordinate the fusion of mitochondrial inner membranes. Inner membrane-anchored L-MGM1 molecules initiate membrane remodeling by recruiting soluble S-MGM1 to rapidly polymerize into a flexible cylindrical scaffold encaging the mitochondrial inner membrane. Once at the membrane surface, the formation of S-MGM1 helices induce bilayer curvature. MGM1 dimerization through the paddle region, which inserts into cardiolipin-containing membrane, promotes GTP hydrolysis and the helical assembly of a flexible MGM1 lattice on the membrane, which drives membrane curvature and mitochondrial fusion. Excess levels of S-MGM1 produced by cleavage by PCP1 following stress conditions that induce loss of mitochondrial membrane potential, lead to an impaired equilibrium between L-MGM1 and S-MGM1, thereby inhibiting mitochondrial fusion. The protein is Dynamin-like GTPase MGM1, mitochondrial of Saccharomyces cerevisiae (strain ATCC 204508 / S288c) (Baker's yeast).